We begin with the raw amino-acid sequence, 232 residues long: GTP cyclohydrolase III (232 aa).

This sequence belongs to the archaeal-type GTP cyclohydrolase family.

It catalyses the reaction GTP + 3 H2O = 2-amino-5-formylamino-6-(5-phospho-D-ribosylamino)pyrimidin-4(3H)-one + 2 phosphate + 2 H(+). Functionally, catalyzes the formation of 2-amino-5-formylamino-6-ribofuranosylamino-4(3H)-pyrimidinone ribonucleotide monophosphate and inorganic phosphate from GTP. Also has an independent pyrophosphate phosphohydrolase activity. This is GTP cyclohydrolase III from Saccharolobus islandicus (strain Y.G.57.14 / Yellowstone #1) (Sulfolobus islandicus).